Reading from the N-terminus, the 83-residue chain is Evasin P1124 (83 aa).

An N-terminal signal peptide occupies residues 1–28 (MAVNVFTILQLAVFAAIVLNVNLHSVSA). Cystine bridges form between Cys-48–Cys-66, Cys-52–Cys-68, and Cys-62–Cys-79. The N-linked (GlcNAc...) asparagine glycan is linked to Asn-51.

The protein resides in the secreted. Functionally, salivary chemokine-binding protein which binds to host chemokines CXCL1, CXCL2, CXCL3, CXCL5, CXCL6, CXCL12 and CXCL13. The chain is Evasin P1124 from Ixodes ricinus (Common tick).